The primary structure comprises 886 residues: Translation initiation factor IF-2 (886 aa).

Disordered regions lie at residues 46–91 and 121–297; these read LDHL…VEVR and EQQK…HGFT. The segment covering 72-82 has biased composition (polar residues); sequence STLSVTGSTGK. Composition is skewed to basic and acidic residues over residues 130–163, 175–239, and 246–260; these read AELKAKQEAERKAKEDADRKAKEEAKRKADAERK, AKSE…DHHL, and REAEDVADARDEQGT. The tr-type G domain occupies 386–555; sequence PRAPVVTVMG…LNQSELLELT (170 aa). The G1 stretch occupies residues 395–402; that stretch reads GHVDHGKT. 395 to 402 contributes to the GTP binding site; that stretch reads GHVDHGKT. The interval 420-424 is G2; the sequence is GITQH. Positions 441 to 444 are G3; it reads DTPG. GTP contacts are provided by residues 441-445 and 495-498; these read DTPGH and NKMD. The interval 495 to 498 is G4; that stretch reads NKMD. Residues 531–533 are G5; that stretch reads SAK.

It belongs to the TRAFAC class translation factor GTPase superfamily. Classic translation factor GTPase family. IF-2 subfamily.

Its subcellular location is the cytoplasm. Its function is as follows. One of the essential components for the initiation of protein synthesis. Protects formylmethionyl-tRNA from spontaneous hydrolysis and promotes its binding to the 30S ribosomal subunits. Also involved in the hydrolysis of GTP during the formation of the 70S ribosomal complex. The polypeptide is Translation initiation factor IF-2 (Pseudoalteromonas translucida (strain TAC 125)).